Here is a 118-residue protein sequence, read N- to C-terminus: UPF0102 protein Franean1_1156 (118 aa).

The protein belongs to the UPF0102 family.

This chain is UPF0102 protein Franean1_1156, found in Parafrankia sp. (strain EAN1pec).